The following is a 96-amino-acid chain: Co-chaperonin GroES (96 aa).

It belongs to the GroES chaperonin family. Heptamer of 7 subunits arranged in a ring. Interacts with the chaperonin GroEL.

Its subcellular location is the cytoplasm. Together with the chaperonin GroEL, plays an essential role in assisting protein folding. The GroEL-GroES system forms a nano-cage that allows encapsulation of the non-native substrate proteins and provides a physical environment optimized to promote and accelerate protein folding. GroES binds to the apical surface of the GroEL ring, thereby capping the opening of the GroEL channel. This Buchnera aphidicola subsp. Myzus persicae (Myzus persicae primary endosymbiont) protein is Co-chaperonin GroES.